The chain runs to 137 residues: Proofreading thioesterase EntH (137 aa).

Glutamate 63 serves as the catalytic Nucleophile or proton acceptor.

This sequence belongs to the thioesterase PaaI family. Homotetramer. Dimer of dimers. Interacts specifically with the aryl carrier protein (ArCP) domain of EntB.

The protein resides in the cytoplasm. The protein operates within siderophore biosynthesis; enterobactin biosynthesis. Its function is as follows. Required for optimal enterobactin synthesis. Acts as a proofreading enzyme that prevents EntB misacylation by hydrolyzing the thioester bound existing between EntB and wrongly charged molecules. The sequence is that of Proofreading thioesterase EntH from Citrobacter koseri (strain ATCC BAA-895 / CDC 4225-83 / SGSC4696).